A 609-amino-acid polypeptide reads, in one-letter code: Granule-bound starch synthase 1, chloroplastic/amyloplastic (609 aa).

The transit peptide at 1–77 (MSALTTSQLA…SRRFPSVVVY (77 aa)) directs the protein to the chloroplast. The disordered stretch occupies residues 29-67 (RHGFQGLKPRSPAGGDATSLSVTTSARATPKQQRSVQRG). Positions 46–66 (TSLSVTTSARATPKQQRSVQR) are enriched in polar residues. K97 provides a ligand contact to ADP-alpha-D-glucose.

Belongs to the glycosyltransferase 1 family. Bacterial/plant glycogen synthase subfamily.

Its subcellular location is the plastid. The protein localises to the chloroplast. It is found in the amyloplast. It catalyses the reaction an NDP-alpha-D-glucose + [(1-&gt;4)-alpha-D-glucosyl](n) = [(1-&gt;4)-alpha-D-glucosyl](n+1) + a ribonucleoside 5'-diphosphate + H(+). It functions in the pathway glycan biosynthesis; starch biosynthesis. Functionally, required for the synthesis of amylose in endosperm. The chain is Granule-bound starch synthase 1, chloroplastic/amyloplastic (WAXY) from Oryza glaberrima (African rice).